Reading from the N-terminus, the 95-residue chain is Aspartyl/glutamyl-tRNA(Asn/Gln) amidotransferase subunit C (95 aa).

This sequence belongs to the GatC family. Heterotrimer of A, B and C subunits.

It carries out the reaction L-glutamyl-tRNA(Gln) + L-glutamine + ATP + H2O = L-glutaminyl-tRNA(Gln) + L-glutamate + ADP + phosphate + H(+). The catalysed reaction is L-aspartyl-tRNA(Asn) + L-glutamine + ATP + H2O = L-asparaginyl-tRNA(Asn) + L-glutamate + ADP + phosphate + 2 H(+). Its function is as follows. Allows the formation of correctly charged Asn-tRNA(Asn) or Gln-tRNA(Gln) through the transamidation of misacylated Asp-tRNA(Asn) or Glu-tRNA(Gln) in organisms which lack either or both of asparaginyl-tRNA or glutaminyl-tRNA synthetases. The reaction takes place in the presence of glutamine and ATP through an activated phospho-Asp-tRNA(Asn) or phospho-Glu-tRNA(Gln). This is Aspartyl/glutamyl-tRNA(Asn/Gln) amidotransferase subunit C from Syntrophotalea carbinolica (strain DSM 2380 / NBRC 103641 / GraBd1) (Pelobacter carbinolicus).